The chain runs to 443 residues: Glutamate-1-semialdehyde 2,1-aminomutase (443 aa).

Position 281 is an N6-(pyridoxal phosphate)lysine (lysine 281).

The protein belongs to the class-III pyridoxal-phosphate-dependent aminotransferase family. HemL subfamily. As to quaternary structure, homodimer. Requires pyridoxal 5'-phosphate as cofactor.

The protein resides in the cytoplasm. The catalysed reaction is (S)-4-amino-5-oxopentanoate = 5-aminolevulinate. The protein operates within porphyrin-containing compound metabolism; protoporphyrin-IX biosynthesis; 5-aminolevulinate from L-glutamyl-tRNA(Glu): step 2/2. The sequence is that of Glutamate-1-semialdehyde 2,1-aminomutase from Leptospira interrogans serogroup Icterohaemorrhagiae serovar Lai (strain 56601).